We begin with the raw amino-acid sequence, 120 residues long: MSTPRKEQTQKRHRRLRRHLEGTPERPRLAVYRSNEHIYAQVIDDAAQHTLAAASSLDKDLRTSLNNGANCDASTAVGQLVAKRAIAKGIQQVVFDRGGNLYHGRVKALAEAAREAGLQF.

The segment covering 1-10 (MSTPRKEQTQ) has biased composition (basic and acidic residues). The tract at residues 1 to 25 (MSTPRKEQTQKRHRRLRRHLEGTPE) is disordered.

The protein belongs to the universal ribosomal protein uL18 family. As to quaternary structure, part of the 50S ribosomal subunit; part of the 5S rRNA/L5/L18/L25 subcomplex. Contacts the 5S and 23S rRNAs.

Functionally, this is one of the proteins that bind and probably mediate the attachment of the 5S RNA into the large ribosomal subunit, where it forms part of the central protuberance. The chain is Large ribosomal subunit protein uL18 from Synechococcus sp. (strain RCC307).